We begin with the raw amino-acid sequence, 471 residues long: Pancreatic lipase-related protein 2 (471 aa).

Residues 1 to 17 (MLPSWTIGLLLLATVRG) form the signal peptide. A disulfide bond links C21 and C27. N71 is a glycosylation site (N-linked (GlcNAc...) asparagine). Residues 93 to 105 (IHGFIDKGEDSWP) are required for galactolipase activity. Cysteines 109 and 120 form a disulfide. The active-site Nucleophile is S171. The active-site Charge relay system is the D195. Positions 206, 209, 211, and 214 each coordinate Ca(2+). C256 and C280 are joined by a disulfide. Positions 257–279 (QKNTLSTIVDVDGIWEGIEDFAA) are required for galactolipase activity. H282 acts as the Charge relay system in catalysis. 2 cysteine pairs are disulfide-bonded: C304-C317 and C320-C325. N-linked (GlcNAc...) asparagine glycosylation occurs at N355. Positions 359–471 (WRYRVSVTLA…ENILQTLNPC (113 aa)) constitute a PLAT domain. Residues C455 and C471 are joined by a disulfide bond.

The protein belongs to the AB hydrolase superfamily. Lipase family.

It localises to the secreted. Its subcellular location is the zymogen granule membrane. The protein localises to the cell projection. The protein resides in the neuron projection. The catalysed reaction is a triacylglycerol + H2O = a diacylglycerol + a fatty acid + H(+). It catalyses the reaction a 1,2-diacyl-3-O-(beta-D-galactosyl)-sn-glycerol + 2 H2O = 3-beta-D-galactosyl-sn-glycerol + 2 a fatty acid + 2 H(+). It carries out the reaction 1,2,3-tri-(9Z-octadecenoyl)-glycerol + H2O = di-(9Z)-octadecenoylglycerol + (9Z)-octadecenoate + H(+). The enzyme catalyses di-(9Z)-octadecenoylglycerol + H2O = (9Z-octadecenoyl)-glycerol + (9Z)-octadecenoate + H(+). The catalysed reaction is (9Z-octadecenoyl)-glycerol + H2O = glycerol + (9Z)-octadecenoate + H(+). It catalyses the reaction 1-(9Z-octadecenoyl)-glycerol + H2O = glycerol + (9Z)-octadecenoate + H(+). It carries out the reaction 1,2,3-tripropanoylglycerol + H2O = dipropanoylglycerol + propanoate + H(+). The enzyme catalyses 1,2,3-tributanoylglycerol + H2O = dibutanoylglycerol + butanoate + H(+). The catalysed reaction is 1,2,3-trioctanoylglycerol + H2O = dioctanoylglycerol + octanoate + H(+). It catalyses the reaction 1,2-didecanoylglycerol + H2O = decanoylglycerol + decanoate + H(+). It carries out the reaction long chain 1,2-diacyl-3-O-beta-D-galactosyl-sn-glycerol + H2O = long chain acyl-3-O-beta-D-galactosyl-sn-glycerol + a fatty acid + H(+). The enzyme catalyses 1,2-dioctanoyl-3-O-beta-D-galactosyl-sn-glycerol + H2O = octanoyl-3-(beta-D-galactosyl)-sn-glycerol + octanoate + H(+). The catalysed reaction is 1,2-didodecanoyl-3-beta-D-galactosyl-sn-glycerol + H2O = dodecanoyl-3-beta-D-galactosyl-sn-glycerol + dodecanoate + H(+). It catalyses the reaction 1-beta-D-galactosyl-2,3-didodecanoyl-sn-glycerol + H2O = 1-beta-D-galactosyl-dodecanoyl-sn-glycerol + dodecanoate + H(+). It carries out the reaction a 1,2-diacyl-3-O-[alpha-D-galactosyl-(1-&gt;6)-beta-D-galactosyl]-sn-glycerol + H2O = acyl-3-O-[alpha-D-galactosyl-(1-&gt;6)-beta-D-galactosyl]-sn-glycerol + a fatty acid + H(+). The enzyme catalyses long chain 1,2-diacyl-3-O-[alpha-D-galactosyl-(1-&gt;6)-beta-D-galactosyl]-sn-glycerol + H2O = long chain acyl-3-O-[alpha-D-galactosyl-(1-&gt;6)-beta-D-galactosyl]-sn-glycerol + a fatty acid + H(+). The catalysed reaction is 1,2-dioctanoyl-3-O-[alpha-D-galactosyl-(1-&gt;6)-beta-D-galactosyl]-sn-glycerol + H2O = octanoyl-3-O-[alpha-D-galactosyl-(1-&gt;6)-beta-D-galactosyl]-sn-glycerol + octanoate + H(+). It catalyses the reaction 1,2-didodecanoyl-3-O-[alpha-D-galactosyl-(1-&gt;6)-beta-D-galactosyl]-sn-glycerol + H2O = dodecanoyl-3-O-[alpha-D-galactosyl-(1-&gt;6)-beta-D-galactosyl]-sn-glycerol + dodecanoate + H(+). It carries out the reaction a 1,2-diacyl-sn-glycero-3-phosphocholine + H2O = a monoacyl-sn-glycero-3-phosphocholine + a fatty acid + H(+). The protein operates within glycerolipid metabolism; triacylglycerol degradation. Its pathway is glycolipid metabolism. With respect to regulation, up-regulated by CLPS in the presence of increasing concentrations of bile salts. Functionally, lipase that primarily hydrolyzes triglycerides and galactosylglycerides. In neonates, may play a major role in pancreatic digestion of dietary fats such as milk fat globules enriched in long-chain triglycerides. Hydrolyzes short-, medium- and long-chain fatty acyls in triglycerides without apparent positional specificity. Can completely deacylate triacylglycerols. When the liver matures and bile salt synthesis increases, likely functions mainly as a galactolipase and monoacylglycerol lipase. Hydrolyzes monogalactosyldiglycerols (MGDG) and digalactosyldiacylglycerols (DGDG) present in a plant-based diet, releasing long-chain polyunsaturated fatty acids. Hydrolyzes medium- and long-chain fatty acyls in galactolipids. May act together with LIPF to hydrolyze partially digested triglycerides. Hydrolyzes long-chain monoglycerides with high efficiency. In cytotoxic T cells, contributes to perforin-dependent cell lysis, but is unlikely to mediate direct cytotoxicity. Also has low phospholipase activity. In neurons, required for the localization of the phospholipid 1-oleoyl-2-palmitoyl-PC (OPPC) to neurite tips through acyl chain remodeling of membrane phospholipids. The resulting OPPC-rich lipid membrane domain recruits the t-SNARE protein STX4 by selectively interacting with the STX4 transmembrane domain and this promotes surface expression of the dopamine transporter SLC6A3/DAT at neurite tips by facilitating fusion of SLC6A3-containing transport vesicles with the plasma membrane. This is Pancreatic lipase-related protein 2 (PNLIPRP2) from Sus scrofa (Pig).